Here is a 151-residue protein sequence, read N- to C-terminus: FAD synthase (151 aa).

Residues 21–22, 26–29, and Asp-104 contribute to the ATP site; these read TF and HPGH.

Belongs to the archaeal FAD synthase family. Homodimer. It depends on a divalent metal cation as a cofactor.

It catalyses the reaction FMN + ATP + H(+) = FAD + diphosphate. Its pathway is cofactor biosynthesis; FAD biosynthesis; FAD from FMN: step 1/1. Functionally, catalyzes the transfer of the AMP portion of ATP to flavin mononucleotide (FMN) to produce flavin adenine dinucleotide (FAD) coenzyme. The chain is FAD synthase from Methanosarcina mazei (strain ATCC BAA-159 / DSM 3647 / Goe1 / Go1 / JCM 11833 / OCM 88) (Methanosarcina frisia).